A 120-amino-acid polypeptide reads, in one-letter code: MMRKLKTLPPTLRDKNRYIAFEIISDGDFTKDEVKELIWKSSLEVLGETGTAIVKPWLIKFDPNTKTGIVRCDREYVEYLRFALMLVSEFNGKRLIIRTLGVSGTIKRLKRKFLAKYGWK.

This sequence belongs to the eukaryotic/archaeal RNase P protein component 2 family. Homodimer in solution. Component of RNase P which consists of a catalytic RNA component and at least 5 protein subunits. Forms a heterotetrameric subcomplex with Rnp3. Reconstituted enzyme missing individual protein subunits is suboptimally active, showing each subunit contributes to optimization of activity.

The protein resides in the cytoplasm. The catalysed reaction is Endonucleolytic cleavage of RNA, removing 5'-extranucleotides from tRNA precursor.. Its function is as follows. Part of ribonuclease P, a protein complex that generates mature tRNA molecules by cleaving their 5'-ends. The protein is Ribonuclease P protein component 2 of Pyrococcus horikoshii (strain ATCC 700860 / DSM 12428 / JCM 9974 / NBRC 100139 / OT-3).